The following is a 323-amino-acid chain: Galectin-4 (323 aa).

Galectin domains are found at residues 19 to 150 (YYKP…INFI) and 194 to 323 (YKTR…YVQI). Position 256–262 (256–262 (WGAEERK)) interacts with a beta-D-galactoside.

As to quaternary structure, monomer.

Galectin that binds lactose and a related range of sugars. May be involved in the assembly of adherens junctions. This chain is Galectin-4 (LGALS4), found in Sus scrofa (Pig).